We begin with the raw amino-acid sequence, 248 residues long: Probable succinyl-CoA:3-ketoacid coenzyme A transferase subunit A (248 aa).

24 to 30 lines the CoA pocket; it reads GGFGLCG.

This sequence belongs to the 3-oxoacid CoA-transferase subunit A family. Heterodimer of a subunit A and a subunit B.

The catalysed reaction is a 3-oxo acid + succinyl-CoA = a 3-oxoacyl-CoA + succinate. This chain is Probable succinyl-CoA:3-ketoacid coenzyme A transferase subunit A (scoA), found in Mycobacterium bovis (strain ATCC BAA-935 / AF2122/97).